The sequence spans 384 residues: S-adenosylmethionine synthase (384 aa).

H15 serves as a coordination point for ATP. Residue D17 participates in Mg(2+) binding. E43 is a binding site for K(+). L-methionine-binding residues include E56 and Q99. The interval 99-109 (QSADINQGVDR) is flexible loop. ATP contacts are provided by residues 164–166 (DAK), 230–231 (RF), D239, 245–246 (RK), A262, and K266. D239 lines the L-methionine pocket. An L-methionine-binding site is contributed by K270.

Belongs to the AdoMet synthase family. In terms of assembly, homotetramer; dimer of dimers. It depends on Mg(2+) as a cofactor. K(+) is required as a cofactor.

It is found in the cytoplasm. It catalyses the reaction L-methionine + ATP + H2O = S-adenosyl-L-methionine + phosphate + diphosphate. It functions in the pathway amino-acid biosynthesis; S-adenosyl-L-methionine biosynthesis; S-adenosyl-L-methionine from L-methionine: step 1/1. Functionally, catalyzes the formation of S-adenosylmethionine (AdoMet) from methionine and ATP. The overall synthetic reaction is composed of two sequential steps, AdoMet formation and the subsequent tripolyphosphate hydrolysis which occurs prior to release of AdoMet from the enzyme. This chain is S-adenosylmethionine synthase, found in Haemophilus influenzae (strain 86-028NP).